Reading from the N-terminus, the 76-residue chain is Candidate secreted effector protein MPL124497 (76 aa).

The signal sequence occupies residues Met1 to Gly21.

The protein belongs to the CPGH1 family.

It localises to the secreted. Its subcellular location is the host cell. The protein localises to the host cytoplasm. It is found in the host nucleus. Rust effector delivered into infected tissues to modulate host functions and contribute to pathogen virulence. Enhances leaf colonization by the bacteria Pseudomonas syringae and the oomycete Hyaloperonospora arabidopsidis pathogens in an Arabidopsis thaliana infection model. The polypeptide is Candidate secreted effector protein MPL124497 (Melampsora larici-populina (strain 98AG31 / pathotype 3-4-7) (Poplar leaf rust fungus)).